Consider the following 442-residue polypeptide: C4-dicarboxylate transport protein 2 (442 aa).

9 helical membrane passes run 20 to 39 (QLYV…GHYY), 52 to 74 (AFIK…TGIA), 89 to 111 (AMLY…ANVV), 141 to 158 (VTGF…GAFA), 162 to 179 (ILQV…LALV), 200 to 221 (LVSV…FTIG), 231 to 253 (LAML…LGAV), 342 to 364 (ILLL…AGFI), and 368 to 387 (ATLS…ILGV).

This sequence belongs to the dicarboxylate/amino acid:cation symporter (DAACS) (TC 2.A.23) family.

It localises to the cell inner membrane. Its function is as follows. Responsible for the transport of dicarboxylates such as succinate, fumarate, and malate from the periplasm across the membrane. This transport system plays an important role in the energy supply of rhizobium-legume symbionts. This is C4-dicarboxylate transport protein 2 (dctA2) from Mesorhizobium japonicum (strain LMG 29417 / CECT 9101 / MAFF 303099) (Mesorhizobium loti (strain MAFF 303099)).